A 119-amino-acid polypeptide reads, in one-letter code: Evasin P983 (119 aa).

The signal sequence occupies residues 1–21; that stretch reads MKASFCVIASCLVVFALKGTA. Disulfide bonds link cysteine 37–cysteine 59, cysteine 55–cysteine 97, cysteine 72–cysteine 102, and cysteine 92–cysteine 111. N-linked (GlcNAc...) asparagine glycosylation is found at asparagine 48 and asparagine 67.

It is found in the secreted. Salivary chemokine-binding protein which binds to host chemokines CCL2, CCL3 and CCL8. The polypeptide is Evasin P983 (Amblyomma cajennense (Cayenne tick)).